We begin with the raw amino-acid sequence, 1050 residues long: Sucrose-phosphate synthase 4 (1050 aa).

The interval 134 to 167 (QGRNDAEEDLLSELSEGEKDKNDGEKEKSEVVTT) is disordered. S148 carries the phosphoserine modification. The span at 149–163 (EGEKDKNDGEKEKSE) shows a compositional bias: basic and acidic residues. S180 carries the phosphoserine modification.

Belongs to the glycosyltransferase 1 family. Homodimer or homotetramer.

It catalyses the reaction beta-D-fructose 6-phosphate + UDP-alpha-D-glucose = sucrose 6(F)-phosphate + UDP + H(+). The protein operates within glycan biosynthesis; sucrose biosynthesis; sucrose from D-fructose 6-phosphate and UDP-alpha-D-glucose: step 1/2. Its activity is regulated as follows. Activity is regulated by phosphorylation and moderated by concentration of metabolites and light. Functionally, plays a role in photosynthetic sucrose synthesis by catalyzing the rate-limiting step of sucrose biosynthesis from UDP-glucose and fructose- 6-phosphate. Involved in the regulation of carbon partitioning in the leaves of plants. May regulate the synthesis of sucrose and therefore play a major role as a limiting factor in the export of photoassimilates out of the leaf. Plays a role for sucrose availability that is essential for plant growth and fiber elongation. This Arabidopsis thaliana (Mouse-ear cress) protein is Sucrose-phosphate synthase 4.